Reading from the N-terminus, the 337-residue chain is RNA 3'-terminal phosphate cyclase (337 aa).

ATP-binding positions include Gln101 and 282-285 (HMSD). The active-site Tele-AMP-histidine intermediate is the His306.

The protein belongs to the RNA 3'-terminal cyclase family. Type 1 subfamily.

The protein localises to the cytoplasm. The enzyme catalyses a 3'-end 3'-phospho-ribonucleotide-RNA + ATP = a 3'-end 2',3'-cyclophospho-ribonucleotide-RNA + AMP + diphosphate. Functionally, catalyzes the conversion of 3'-phosphate to a 2',3'-cyclic phosphodiester at the end of RNA. The mechanism of action of the enzyme occurs in 3 steps: (A) adenylation of the enzyme by ATP; (B) transfer of adenylate to an RNA-N3'P to produce RNA-N3'PP5'A; (C) and attack of the adjacent 2'-hydroxyl on the 3'-phosphorus in the diester linkage to produce the cyclic end product. The biological role of this enzyme is unknown but it is likely to function in some aspects of cellular RNA processing. The chain is RNA 3'-terminal phosphate cyclase from Saccharolobus islandicus (strain M.16.4 / Kamchatka #3) (Sulfolobus islandicus).